The chain runs to 239 residues: Ubiquinone biosynthesis O-methyltransferase (239 aa).

S-adenosyl-L-methionine-binding residues include arginine 44, glycine 63, aspartate 84, and methionine 128.

It belongs to the methyltransferase superfamily. UbiG/COQ3 family.

It catalyses the reaction a 3-demethylubiquinol + S-adenosyl-L-methionine = a ubiquinol + S-adenosyl-L-homocysteine + H(+). The catalysed reaction is a 3-(all-trans-polyprenyl)benzene-1,2-diol + S-adenosyl-L-methionine = a 2-methoxy-6-(all-trans-polyprenyl)phenol + S-adenosyl-L-homocysteine + H(+). Its pathway is cofactor biosynthesis; ubiquinone biosynthesis. Its function is as follows. O-methyltransferase that catalyzes the 2 O-methylation steps in the ubiquinone biosynthetic pathway. The polypeptide is Ubiquinone biosynthesis O-methyltransferase (Xanthomonas campestris pv. campestris (strain 8004)).